The following is a 277-amino-acid chain: Caspase-3 (277 aa).

M1 is subject to N-acetylmethionine. 2 consecutive propeptides follow at residues 1–9 and 10–28; these read MDNNETSVD and SKSI…KSMD. An N6-acetyllysine modification is found at K11. Phosphoserine is present on S26. Catalysis depends on residues H121 and C163. C163 is subject to S-nitrosocysteine; in inhibited form.

This sequence belongs to the peptidase C14A family. In terms of assembly, heterotetramer that consists of two anti-parallel arranged heterodimers, each one formed by a 17 kDa (p17) and a 12 kDa (p12) subunit. Interacts with BIRC6/bruce. In terms of processing, cleavage by granzyme B, caspase-6, caspase-8 and caspase-10 generates the two active subunits. Additional processing of the propeptides is likely due to the autocatalytic activity of the activated protease. Active heterodimers between the small subunit of caspase-7 protease and the large subunit of caspase-3 also occur and vice versa. S-nitrosylated on its catalytic site cysteine in unstimulated cell lines and denitrosylated upon activation of the Fas apoptotic pathway, associated with an increase in intracellular caspase activity. Fas therefore activates caspase-3 not only by inducing the cleavage of the caspase zymogen to its active subunits, but also by stimulating the denitrosylation of its active site thiol. Post-translationally, ubiquitinated by BIRC6; this activity is inhibited by DIABLO/SMAC. Expressed in heart, brain, liver, and muscle but not in kidney or testis.

It localises to the cytoplasm. The enzyme catalyses Strict requirement for an Asp residue at positions P1 and P4. It has a preferred cleavage sequence of Asp-Xaa-Xaa-Asp-|- with a hydrophobic amino-acid residue at P2 and a hydrophilic amino-acid residue at P3, although Val or Ala are also accepted at this position.. Inhibited by BIRC6; following inhibition of BIRC6-caspase binding by DIABLO/SMAC, BIRC6 is subjected to caspase cleavage, leading to an increase in active caspases. Involved in the activation cascade of caspases responsible for apoptosis execution. At the onset of apoptosis, it proteolytically cleaves poly(ADP-ribose) polymerase PARP1 at a '216-Asp-|-Gly-217' bond. Cleaves and activates sterol regulatory element binding proteins (SREBPs) between the basic helix-loop-helix leucine zipper domain and the membrane attachment domain. Cleaves and activates caspase-6, -7 and -9 (CASP6, CASP7 and CASP9, respectively). Cleaves and inactivates interleukin-18 (IL18). Triggers cell adhesion in sympathetic neurons through RET cleavage. Cleaves IL-1 beta between an Asp and an Ala, releasing the mature cytokine which is involved in a variety of inflammatory processes. Cleaves and inhibits serine/threonine-protein kinase AKT1 in response to oxidative stress. Acts as an inhibitor of type I interferon production during virus-induced apoptosis by mediating cleavage of antiviral proteins CGAS, IRF3 and MAVS, thereby preventing cytokine overproduction. Also involved in pyroptosis by mediating cleavage and activation of gasdermin-E (GSDME). Cleaves XRCC4 and phospholipid scramblase proteins XKR4, XKR8 and XKR9, leading to promote phosphatidylserine exposure on apoptotic cell surface. Cleaves BIRC6 following inhibition of BIRC6-caspase binding by DIABLO/SMAC. This Rattus norvegicus (Rat) protein is Caspase-3 (Casp3).